The chain runs to 406 residues: Tryptophan synthase beta chain (406 aa).

The residue at position 99 (lysine 99) is an N6-(pyridoxal phosphate)lysine.

Belongs to the TrpB family. Tetramer of two alpha and two beta chains. It depends on pyridoxal 5'-phosphate as a cofactor.

It carries out the reaction (1S,2R)-1-C-(indol-3-yl)glycerol 3-phosphate + L-serine = D-glyceraldehyde 3-phosphate + L-tryptophan + H2O. The protein operates within amino-acid biosynthesis; L-tryptophan biosynthesis; L-tryptophan from chorismate: step 5/5. The beta subunit is responsible for the synthesis of L-tryptophan from indole and L-serine. The protein is Tryptophan synthase beta chain of Brucella abortus (strain 2308).